We begin with the raw amino-acid sequence, 297 residues long: MSKTKDQRTAKTLERTWDTLNHLLFISSCLYKLNLKSIAQITLSILAMIISTSLIIAAIIFIASANHKVTLTTAIIQDATSQIKNTTQTYLTQNTQLGISFSNLSETTSQPTTTPALTTPSAKSTPQSTTVKTKNTTTTQIQPSKPTTKQRQKKPPNKPNNDFHFEVFNFVPCSICSNNPTCWAICKRIPNKKPGKKTTTKPTKKPTIKTTKKDLKPQTTKPKEVLTTKPTEKPTINTTRTNIRTTLLTTNTTGNPEYTSQKETLHSTSPEGNPSPSQVYTTSEYPSQPPSPSNTTN.

The Cytoplasmic segment spans residues 1–37; the sequence is MSKTKDQRTAKTLERTWDTLNHLLFISSCLYKLNLKS. The helical transmembrane segment at 38–66 threads the bilayer; the sequence is IAQITLSILAMIISTSLIIAAIIFIASAN. Topologically, residues 67-297 are extracellular; sequence HKVTLTTAII…QPPSPSNTTN (231 aa). O-linked (GalNAc...) threonine; by host glycosylation is found at T70, T72, and T80. N85 is a glycosylation site (N-linked (GlcNAc...) asparagine; by host). O-linked (GalNAc...) threonine; by host glycosylation is found at T86, T87, and T92. A glycan (O-linked (GalNAc...) serine; by host) is linked at S100. A glycan (N-linked (GlcNAc...) asparagine; by host) is linked at N103. The tract at residues 103-161 is disordered; it reads NLSETTSQPTTTPALTTPSAKSTPQSTTVKTKNTTTTQIQPSKPTTKQRQKKPPNKPNN. The O-linked (GalNAc...) serine; by host glycan is linked to S105. Residues 105–147 are compositionally biased toward low complexity; that stretch reads SETTSQPTTTPALTTPSAKSTPQSTTVKTKNTTTTQIQPSKPT. O-linked (GalNAc...) threonine; by host glycosylation is found at T113 and T119. The N-linked (GlcNAc...) asparagine; by host glycan is linked to N135. O-linked (GalNAc...) threonine; by host glycosylation is found at T137, T138, and T139. A glycan (O-linked (GalNAc...) serine; by host) is linked at S144. T147 is a glycosylation site (O-linked (GalNAc...) threonine; by host). 2 disulfides stabilise this stretch: C173-C186 and C176-C182. The tract at residues 187–198 is binding to host heparan sulfate; the sequence is KRIPNKKPGKKT. Over residues 190 to 207 the composition is skewed to basic residues; that stretch reads PNKKPGKKTTTKPTKKPT. A disordered region spans residues 190 to 297; that stretch reads PNKKPGKKTT…QPPSPSNTTN (108 aa). Residues T199, T203, T219, T231, and T235 are each glycosylated (O-linked (GalNAc...) threonine; by host). The span at 211-232 shows a compositional bias: basic and acidic residues; it reads TKKDLKPQTTKPKEVLTTKPTE. Residues 235-253 show a composition bias toward low complexity; it reads TINTTRTNIRTTLLTTNTT. Residues N237 and N251 are each glycosylated (N-linked (GlcNAc...) asparagine; by host). T253 carries O-linked (GalNAc...) threonine; by host glycosylation. The span at 254-285 shows a compositional bias: polar residues; the sequence is GNPEYTSQKETLHSTSPEGNPSPSQVYTTSEY. 2 O-linked (GalNAc...) serine; by host glycosylation sites follow: S269 and S275. The O-linked (GalNAc...) threonine; by host glycan is linked to T282. Residues S283 and S287 are each glycosylated (O-linked (GalNAc...) serine; by host). Positions 287–297 are enriched in pro residues; sequence SQPPSPSNTTN. N-linked (GlcNAc...) asparagine; by host glycosylation occurs at N294.

The protein belongs to the pneumoviruses glycoprotein G family. Homooligomer. Interacts (via N-terminus) with protein M. Part of a complex composed of F1, F2 and G glycoproteins. Interacts with protein SH. Interacts with host heparate sulfate; this interaction probably participates in the viral attachment to the host cell. Interacts with host CX3CR1; this interaction plays an important role in viral entry. Interacts with the host lectins CD209/DC-SIGN and CD209L/L-SIGN on dendritic cells; these interactions stimulate the phosphorylation of MAPK3/ERK1 and MAPK1/ERK2, which inhibits dendritic cell activation and could participate in the limited immunity against RSV reinfection. In terms of processing, cleaved to give rise to the mature sG protein which lacks the transmembrane domain. Post-translationally, N- and O-glycosylated. May carry 30-40 separate O-linked carbohydrate chains distributed among the 91 serine and threonine residues. Palmitoylated.

It localises to the virion membrane. Its subcellular location is the host cell membrane. The protein localises to the secreted. In terms of biological role, attaches the virion to the host cell membrane by interacting with heparan sulfate, initiating the infection. Interacts with host CX3CR1, the receptor for the CX3C chemokine fractalkine, to modulate the immune response and facilitate infection. Unlike the other paramyxovirus attachment proteins, lacks both neuraminidase and hemagglutinating activities. Helps the virus escape antibody-dependent restriction of replication by acting as an antigen decoy and by modulating the activity of leukocytes bearing Fc-gamma receptors. The sequence is that of Major surface glycoprotein G (G) from Homo sapiens (Human).